Reading from the N-terminus, the 361-residue chain is DNA polymerase IV 3 (361 aa).

Residues 12–192 (IIHVDMDAFY…LPVNKFHGVG (181 aa)) form the UmuC domain. Positions 16 and 110 each coordinate Mg(2+). Residue glutamate 111 is part of the active site.

It belongs to the DNA polymerase type-Y family. Monomer. The cofactor is Mg(2+).

It localises to the cytoplasm. The catalysed reaction is DNA(n) + a 2'-deoxyribonucleoside 5'-triphosphate = DNA(n+1) + diphosphate. Functionally, poorly processive, error-prone DNA polymerase involved in untargeted mutagenesis. Copies undamaged DNA at stalled replication forks, which arise in vivo from mismatched or misaligned primer ends. These misaligned primers can be extended by PolIV. Exhibits no 3'-5' exonuclease (proofreading) activity. May be involved in translesional synthesis, in conjunction with the beta clamp from PolIII. This chain is DNA polymerase IV 3 (dinB3), found in Mesorhizobium japonicum (strain LMG 29417 / CECT 9101 / MAFF 303099) (Mesorhizobium loti (strain MAFF 303099)).